We begin with the raw amino-acid sequence, 439 residues long: 3beta-hydroxysteroid-dehydrogenase/decarboxylase isoform 1 (439 aa).

16-21 (GGRGFA) contacts NAD(+). Asn75 and Asn158 each carry an N-linked (GlcNAc...) asparagine glycan. NAD(+) contacts are provided by Tyr161 and Lys165. Catalysis depends on Lys165, which acts as the Proton donor. A glycan (N-linked (GlcNAc...) asparagine) is linked at Asn327. The Reticulon; atypical domain maps to 371–439 (VTETIQWKKQ…MKVFGSKKID (69 aa)). 2 consecutive transmembrane segments (helical) span residues 381 to 401 (TLIA…TTGS) and 405 to 425 (IITA…INGI).

This sequence belongs to the 3-beta-HSD family.

The protein localises to the endoplasmic reticulum membrane. The catalysed reaction is a 3beta-hydroxysteroid-4alpha-carboxylate + NAD(+) = a 3-oxosteroid + CO2 + NADH. The enzyme catalyses 4alpha-carboxy-4beta,14alpha-dimethyl-9beta,19-cyclo-5alpha-ergost-24(24(1))-en-3beta-ol + NAD(+) = cycloeucalenone + CO2 + NADH. Its pathway is steroid biosynthesis; zymosterol biosynthesis; zymosterol from lanosterol: step 4/6. 3beta-hydroxysteroid-dehydrogenase/decarboxylase involved in sterol synthesis. Catalyzes the formation of 3-oxosteroids from 3beta-hydroxysteroids-4alpha-carboxylate. Involved in the regulation of inflorescence internodes and leaves growth, probably by affecting auxin transporter activity possibly by altering sterol composition in the membranes. In Arabidopsis thaliana (Mouse-ear cress), this protein is 3beta-hydroxysteroid-dehydrogenase/decarboxylase isoform 1.